The primary structure comprises 234 residues: Large ribosomal subunit protein uL1 (234 aa).

The protein belongs to the universal ribosomal protein uL1 family. As to quaternary structure, part of the 50S ribosomal subunit.

In terms of biological role, binds directly to 23S rRNA. The L1 stalk is quite mobile in the ribosome, and is involved in E site tRNA release. Protein L1 is also a translational repressor protein, it controls the translation of the L11 operon by binding to its mRNA. This chain is Large ribosomal subunit protein uL1, found in Erwinia tasmaniensis (strain DSM 17950 / CFBP 7177 / CIP 109463 / NCPPB 4357 / Et1/99).